Here is a 212-residue protein sequence, read N- to C-terminus: UPF0319 protein PBPRA2789 (212 aa).

Positions 1 to 21 (MKKILLAFTLPLVLASQTAMA) are cleaved as a signal peptide.

It belongs to the UPF0319 family.

This chain is UPF0319 protein PBPRA2789, found in Photobacterium profundum (strain SS9).